Reading from the N-terminus, the 428-residue chain is MKSMRILPISLTIMAGLLSIEASAVEFHGYARSGIGWTGSGGEQQCFQSTGAQSKYRLGNECETYAELKLGQELWKDGNKSFYFDTNVAYSVAQKNDWESTDPAFREVNVQAKNVIDWLPGSTLWAGKRFYQRHDVHMIDFYYWDISGPGAGLQDIDLGFSKLALAVTRNTESGGSYGWIASQRKEIPTSNDVYDIRLSGLEVNPGGNLELGFDYGRANARDHYKLDRHASKDGFMFTAEHTQSMLGGFNKFVVQYATDSMTSSNSGHSEGASVNNDGYMLRILNHGAINLAEKWDLMYVAMYQDTDRDNNNGNTWYTVGVRPMYKWTSTMSTLLDIGYDNVKSQRTHDTNDQYKITLAQQWQAGDSIWSRPAIRLFATYAKWNEKWGNANKKDGYIDGMAYRDTATHKFSRGDDDEFTFGAQFEAWW.

The N-terminal stretch at 1–24 (MKSMRILPISLTIMAGLLSIEASA) is a signal peptide.

The protein belongs to the porin LamB (TC 1.B.3) family. As to quaternary structure, homotrimer formed of three 18-stranded antiparallel beta-barrels, containing three independent channels.

The protein resides in the cell outer membrane. The enzyme catalyses beta-maltose(in) = beta-maltose(out). Its function is as follows. Involved in the transport of maltose and maltodextrins. In Photorhabdus laumondii subsp. laumondii (strain DSM 15139 / CIP 105565 / TT01) (Photorhabdus luminescens subsp. laumondii), this protein is Maltoporin.